We begin with the raw amino-acid sequence, 160 residues long: SsrA-binding protein (160 aa).

Residues 133-160 are disordered; sequence KKEHDKREDLKEREWQRDKERMMKNKGR.

It belongs to the SmpB family.

The protein resides in the cytoplasm. Functionally, required for rescue of stalled ribosomes mediated by trans-translation. Binds to transfer-messenger RNA (tmRNA), required for stable association of tmRNA with ribosomes. tmRNA and SmpB together mimic tRNA shape, replacing the anticodon stem-loop with SmpB. tmRNA is encoded by the ssrA gene; the 2 termini fold to resemble tRNA(Ala) and it encodes a 'tag peptide', a short internal open reading frame. During trans-translation Ala-aminoacylated tmRNA acts like a tRNA, entering the A-site of stalled ribosomes, displacing the stalled mRNA. The ribosome then switches to translate the ORF on the tmRNA; the nascent peptide is terminated with the 'tag peptide' encoded by the tmRNA and targeted for degradation. The ribosome is freed to recommence translation, which seems to be the essential function of trans-translation. This Tolumonas auensis (strain DSM 9187 / NBRC 110442 / TA 4) protein is SsrA-binding protein.